Here is a 339-residue protein sequence, read N- to C-terminus: Dihydroorotate dehydrogenase (quinone) (339 aa).

Residues 61-65 and threonine 85 each bind FMN; that span reads AGLDK. Lysine 65 lines the substrate pocket. 110-114 provides a ligand contact to substrate; sequence NRMGF. Asparagine 138 and asparagine 171 together coordinate FMN. Asparagine 171 contributes to the substrate binding site. Serine 174 functions as the Nucleophile in the catalytic mechanism. Position 176 (asparagine 176) interacts with substrate. The FMN site is built by lysine 216 and threonine 244. Substrate is bound at residue 245 to 246; that stretch reads NT. FMN contacts are provided by residues glycine 267, glycine 296, and 317–318; that span reads YS.

It belongs to the dihydroorotate dehydrogenase family. Type 2 subfamily. As to quaternary structure, monomer. FMN is required as a cofactor.

It localises to the cell membrane. It carries out the reaction (S)-dihydroorotate + a quinone = orotate + a quinol. It functions in the pathway pyrimidine metabolism; UMP biosynthesis via de novo pathway; orotate from (S)-dihydroorotate (quinone route): step 1/1. Catalyzes the conversion of dihydroorotate to orotate with quinone as electron acceptor. The polypeptide is Dihydroorotate dehydrogenase (quinone) (Pseudomonas fluorescens (strain ATCC BAA-477 / NRRL B-23932 / Pf-5)).